Consider the following 302-residue polypeptide: Probable 2-(5''-triphosphoribosyl)-3'-dephosphocoenzyme-A synthase 1 (302 aa).

It belongs to the CitG/MdcB family.

It carries out the reaction 3'-dephospho-CoA + ATP = 2'-(5''-triphospho-alpha-D-ribosyl)-3'-dephospho-CoA + adenine. This is Probable 2-(5''-triphosphoribosyl)-3'-dephosphocoenzyme-A synthase 1 from Salmonella typhimurium (strain LT2 / SGSC1412 / ATCC 700720).